A 446-amino-acid polypeptide reads, in one-letter code: AP-2 complex subunit mu (446 aa).

S145, S151, and S152 each carry phosphoserine. At T157 the chain carries Phosphothreonine. Residues 177 to 445 (KNSIYIDIVE…STRAGTCEIR (269 aa)) enclose the MHD domain.

It belongs to the adaptor complexes medium subunit family. Adaptor protein complex 2 (AP-2) is a heterotetramer composed of two large adaptins (alpha-type subunit apl3 and beta-type subunit apl1), a medium chain (mu-type subunit apm4) and a small adaptin (sigma-type subunit aps2).

Its subcellular location is the cell membrane. It localises to the membrane. The protein localises to the coated pit. Functionally, component of the adaptor complexes which link clathrin to receptors in coated vesicles. Clathrin-associated protein complexes are believed to interact with the cytoplasmic tails of membrane proteins, leading to their selection and concentration. AP50 is a subunit of the plasma membrane adaptor (Potential). This is AP-2 complex subunit mu (apm4) from Schizosaccharomyces pombe (strain 972 / ATCC 24843) (Fission yeast).